The following is an 886-amino-acid chain: DNA mismatch repair protein MutS (886 aa).

627-634 (GPNMGGKS) is an ATP binding site. Positions 834-857 (VECADAPAPSDATHPALDRLRDID) are disordered.

The protein belongs to the DNA mismatch repair MutS family.

In terms of biological role, this protein is involved in the repair of mismatches in DNA. It is possible that it carries out the mismatch recognition step. This protein has a weak ATPase activity. This chain is DNA mismatch repair protein MutS, found in Burkholderia vietnamiensis (strain G4 / LMG 22486) (Burkholderia cepacia (strain R1808)).